Consider the following 501-residue polypeptide: Lysine--tRNA ligase (501 aa).

Glutamate 411 and glutamate 418 together coordinate Mg(2+).

Belongs to the class-II aminoacyl-tRNA synthetase family. Homodimer. Mg(2+) serves as cofactor.

It is found in the cytoplasm. The catalysed reaction is tRNA(Lys) + L-lysine + ATP = L-lysyl-tRNA(Lys) + AMP + diphosphate. The chain is Lysine--tRNA ligase from Clostridium perfringens (strain SM101 / Type A).